A 97-amino-acid polypeptide reads, in one-letter code: Ice-structuring protein (97 aa).

Positions 1-23 (MALSLFTVGQLIFLFWTLRITEA) are cleaved as a signal peptide. Residues 24–48 (NPDPAAKAAPAAVADPAAAAAAAVA) constitute a propeptide, removed by a dipeptidylpeptidase.

Belongs to the type-I AFP family. Detected in blood serum (at protein level).

The protein localises to the secreted. Contributes to protect fish blood from freezing at subzero sea water temperatures. Lowers the blood freezing point. Binds to nascent ice crystals and prevents further growth. The sequence is that of Ice-structuring protein from Myzopsetta ferruginea (Yellowtail flounder).